We begin with the raw amino-acid sequence, 400 residues long: Envelope glycoprotein M (400 aa).

Residues 1 to 16 are Intravirion-facing; that stretch reads MRASKSDRFLMSSWVK. The helical transmembrane segment at 17-37 threads the bilayer; sequence LLFVAVIMYICSAVVPMAATY. The Virion surface segment spans residues 38–76; sequence EGLGFPCYFNNLVNYSALNLTVRNSAKHLTPTLFLEKPE. A helical membrane pass occupies residues 77 to 97; that stretch reads MLVYIFWTFIVDGIAIVYYCL. At 98–113 the chain is on the intravirion side; the sequence is AAVAVYRAKHVHATTM. The chain crosses the membrane as a helical span at residues 114 to 134; it reads MSMQSWIALLGSHSVLYVAIL. At 135 to 152 the chain is on the virion surface side; it reads RMWSMQLFIHVLSYKHVL. Residues 153 to 173 form a helical membrane-spanning segment; that stretch reads MAAFVYCIHFCISFAHIQSLI. At 174–208 the chain is on the intravirion side; that stretch reads TCNSAQWEIPLLEQHVPDNTMMESLLTRWKPVCVN. The helical transmembrane segment at 209–229 threads the bilayer; the sequence is LYLSTTALEMLLFSLSTMMAV. Residues 230–234 lie on the Virion surface side of the membrane; sequence GNSFY. Residues 235–255 traverse the membrane as a helical segment; sequence VLVSDAIFGAVNMFLALTVVW. Residues 256 to 270 lie on the Intravirion side of the membrane; the sequence is YINTEFFLVKFMRRQ. A helical membrane pass occupies residues 271–291; it reads VGFYVGVFVGYLILLLPVIRY. The Virion surface segment spans residues 292–300; that stretch reads ENAFVQANL. Residues 301 to 321 traverse the membrane as a helical segment; that stretch reads HYIVAINISCIPILCILAIVI. Residues 322–400 lie on the Intravirion side of the membrane; it reads RVIRSDWGLC…EIDETQMIFI (79 aa). Residues 348–394 are disordered; that stretch reads DRTPTVHQKPPPLPAKTRARAKVKDISTPAPRTQYQSDHESDSEIDE.

This sequence belongs to the herpesviridae glycoprotein M family. As to quaternary structure, interacts (via N-terminus) with gN (via N-terminus). The gM-gN heterodimer forms the gCII complex. N-glycosylated.

It is found in the virion membrane. The protein resides in the host Golgi apparatus. Its subcellular location is the host trans-Golgi network. The protein localises to the host endosome membrane. It localises to the host nucleus inner membrane. Functionally, envelope glycoprotein important for virion assembly and egress. Plays a role in the correct incorporation of gH-gL into virion membrane. Directs the glycoprotein N (gN) to the host trans-Golgi network. This is Envelope glycoprotein M from Homo sapiens (Human).